The chain runs to 440 residues: Glyceraldehyde-3-phosphate dehydrogenase, testis-specific (440 aa).

The tract at residues 1–105 (MSRRDVVLTN…PPPPPLQKPA (105 aa)) is testis-specific N-terminal extension. Pro residues-rich tracts occupy residues 40–75 (PPKL…PPQI) and 83–102 (APPP…PPLQ). A disordered region spans residues 40-106 (PPKLEDPPPT…PPPPLQKPAR (67 aa)). Residues 117-118 (RI), Asp-138, Lys-183, Tyr-205, and Thr-225 each bind NAD(+). Residues 255-257 (SCT), Thr-286, 315-316 (TG), and Arg-338 contribute to the D-glyceraldehyde 3-phosphate site. The active-site Nucleophile is Cys-256. Ser-358 is subject to Phosphoserine. Asn-420 is a binding site for NAD(+).

Belongs to the glyceraldehyde-3-phosphate dehydrogenase family. In terms of assembly, homotetramer. As to expression, testis specific.

The protein resides in the cytoplasm. The enzyme catalyses D-glyceraldehyde 3-phosphate + phosphate + NAD(+) = (2R)-3-phospho-glyceroyl phosphate + NADH + H(+). It participates in carbohydrate degradation; glycolysis; pyruvate from D-glyceraldehyde 3-phosphate: step 1/5. May play an important role in regulating the switch between different pathways for energy production during spermiogenesis and in the spermatozoon. Required for sperm motility and male fertility. The sequence is that of Glyceraldehyde-3-phosphate dehydrogenase, testis-specific (Gapdhs) from Mus musculus (Mouse).